Here is a 347-residue protein sequence, read N- to C-terminus: GPN-loop GTPase 2 (347 aa).

12 to 17 (GSGKST) lines the GTP pocket. The Gly-Pro-Asn (GPN)-loop; involved in dimer interface motif lies at 69-71 (GPN). 175–178 (SKID) is a binding site for GTP.

Belongs to the GPN-loop GTPase family. As to quaternary structure, heterodimers with NPA3/GPN1 or GPN3. Binds to RNA polymerase II (RNAPII).

The protein localises to the cytoplasm. In terms of biological role, small GTPase required for proper localization of RNA polymerase II and III (RNAPII and RNAPIII). May act at an RNAP assembly step prior to nuclear import. Required for establishment of sister chromatid cohesion. The protein is GPN-loop GTPase 2 of Saccharomyces cerevisiae (strain ATCC 204508 / S288c) (Baker's yeast).